Reading from the N-terminus, the 208-residue chain is MFIKICGIKTPEELEIVENYGNATGVILECVSKRRIGFETAKNLVNLANIPVFAVSTTSDVSVWENIIELTGTNYLQMHSDIDQKAIDFIKNEYGCFIMKSFKIPEKSESPENDAQKIISDIESYEVDRILLDTGKGCGQTHDHRISQILAKKFDIVLAGGLDPDNVLKIVKTVKPFGVDVSSGVENNNSKDEELIKRFCENVKSVKL.

This sequence belongs to the TrpF family.

The enzyme catalyses N-(5-phospho-beta-D-ribosyl)anthranilate = 1-(2-carboxyphenylamino)-1-deoxy-D-ribulose 5-phosphate. It participates in amino-acid biosynthesis; L-tryptophan biosynthesis; L-tryptophan from chorismate: step 3/5. In Methanococcus maripaludis (strain C5 / ATCC BAA-1333), this protein is N-(5'-phosphoribosyl)anthranilate isomerase.